The sequence spans 190 residues: Peptidyl-prolyl cis-trans isomerase FKBP20-1 (190 aa).

The residue at position 2 (Gly-2) is an N-acetylglycine. A PPIase FKBP-type domain is found at 32–121 (LPVVDVHYEG…IFEVELVACR (90 aa)). Residues 149 to 163 (AAAKEDDKKKREEAK) are compositionally biased toward basic and acidic residues. Residues 149 to 190 (AAAKEDDKKKREEAKAAAAARIQAKLDAKKGPGKGKGKGKAK) form a disordered region. The span at 179-190 (GPGKGKGKGKAK) shows a compositional bias: basic residues.

This sequence belongs to the FKBP-type PPIase family.

The catalysed reaction is [protein]-peptidylproline (omega=180) = [protein]-peptidylproline (omega=0). PPIases accelerate the folding of proteins. It catalyzes the cis-trans isomerization of proline imidic peptide bonds in oligopeptides. This chain is Peptidyl-prolyl cis-trans isomerase FKBP20-1 (FKBP20-1), found in Arabidopsis thaliana (Mouse-ear cress).